A 123-amino-acid polypeptide reads, in one-letter code: MRHYEIVFMVHPDQSEQVAGMIERYTGSITEAGGKIHRLEDWGRRQLAYPINKLHKAHYVLMNVEADQAVIDELETAFRYNDAVLRNMIMRTKAAITEPSIMLKQKEERAPRREAEAKEFAAE.

The tract at residues 102–123 (MLKQKEERAPRREAEAKEFAAE) is disordered. A compositionally biased stretch (basic and acidic residues) spans 104 to 123 (KQKEERAPRREAEAKEFAAE).

The protein belongs to the bacterial ribosomal protein bS6 family.

Binds together with bS18 to 16S ribosomal RNA. The sequence is that of Small ribosomal subunit protein bS6 from Vibrio vulnificus (strain CMCP6).